Here is a 160-residue protein sequence, read N- to C-terminus: Cytochrome b6-f complex subunit 4 (160 aa).

Transmembrane regions (helical) follow at residues 36-56 (LLYIFPVVILGTIACTIGLAV), 95-115 (LLGVLLMASVPVGLLTVPFLE), and 131-151 (TVFLIGTAVAIWLGIGAALPI).

It belongs to the cytochrome b family. PetD subfamily. The 4 large subunits of the cytochrome b6-f complex are cytochrome b6, subunit IV (17 kDa polypeptide, petD), cytochrome f and the Rieske protein, while the 4 small subunits are petG, petL, petM and petN. The complex functions as a dimer.

It is found in the plastid. It localises to the chloroplast thylakoid membrane. In terms of biological role, component of the cytochrome b6-f complex, which mediates electron transfer between photosystem II (PSII) and photosystem I (PSI), cyclic electron flow around PSI, and state transitions. This Chara vulgaris (Common stonewort) protein is Cytochrome b6-f complex subunit 4.